Consider the following 257-residue polypeptide: Outer dense fiber protein 4 (257 aa).

The segment at Met-1–Gln-41 is disordered. Basic and acidic residues predominate over residues Pro-11 to Gly-30. A Phosphoserine modification is found at Ser-64. 3 helical membrane passes run Ala-80–Phe-100, Val-152–Glu-172, and Ile-179–Leu-199.

Expressed in testis and sperm; especially localized to sperm tail (at protein level).

The protein resides in the membrane. Functionally, component of the outer dense fibers (ODF) of spermatozoa which could be involved in sperm tail structure, sperm movement and general organization of cellular cytoskeleton. This is Outer dense fiber protein 4 (ODF4) from Homo sapiens (Human).